Reading from the N-terminus, the 183-residue chain is Large ribosomal subunit protein bL27m (183 aa).

The N-terminal 34 residues, 1-34, are a transit peptide targeting the mitochondrion; sequence MFLRPTSIPSAVSQIRAQLFAGPSSLASQIQVRW.

This sequence belongs to the bacterial ribosomal protein bL27 family.

The protein resides in the mitochondrion. This is Large ribosomal subunit protein bL27m (RPL27) from Cryptococcus neoformans var. neoformans serotype D (strain B-3501A) (Filobasidiella neoformans).